The following is a 249-amino-acid chain: Hydroxyacylglutathione hydrolase (249 aa).

Zn(2+) is bound by residues H53, H55, D57, H58, H110, D127, and H165.

The protein belongs to the metallo-beta-lactamase superfamily. Glyoxalase II family. Monomer. Zn(2+) serves as cofactor.

The enzyme catalyses an S-(2-hydroxyacyl)glutathione + H2O = a 2-hydroxy carboxylate + glutathione + H(+). It functions in the pathway secondary metabolite metabolism; methylglyoxal degradation; (R)-lactate from methylglyoxal: step 2/2. Functionally, thiolesterase that catalyzes the hydrolysis of S-D-lactoyl-glutathione to form glutathione and D-lactic acid. In Hamiltonella defensa subsp. Acyrthosiphon pisum (strain 5AT), this protein is Hydroxyacylglutathione hydrolase.